The following is a 513-amino-acid chain: ATP synthase subunit alpha (513 aa).

Residue 169–176 (GDRQTGKT) coordinates ATP.

Belongs to the ATPase alpha/beta chains family. In terms of assembly, F-type ATPases have 2 components, CF(1) - the catalytic core - and CF(0) - the membrane proton channel. CF(1) has five subunits: alpha(3), beta(3), gamma(1), delta(1), epsilon(1). CF(0) has three main subunits: a(1), b(2) and c(9-12). The alpha and beta chains form an alternating ring which encloses part of the gamma chain. CF(1) is attached to CF(0) by a central stalk formed by the gamma and epsilon chains, while a peripheral stalk is formed by the delta and b chains.

It localises to the cell inner membrane. It carries out the reaction ATP + H2O + 4 H(+)(in) = ADP + phosphate + 5 H(+)(out). Its function is as follows. Produces ATP from ADP in the presence of a proton gradient across the membrane. The alpha chain is a regulatory subunit. In Thioalkalivibrio sulfidiphilus (strain HL-EbGR7), this protein is ATP synthase subunit alpha.